We begin with the raw amino-acid sequence, 217 residues long: MKIVIADDHAVVRTGFSMILNFQEDMEVVATAADGGEAYQKVMEHKPDVLIMDLSMPPGESGLIATSKISESFPETKILILTMYDDEEYLFHVLRNGAKGYILKNAPDEQLLLAVRTVYKGETYVDMKLTTSLVNEFVNHKHSDDVSTNDPFKILSKRELEILPLIAKGYGNKDIAEKLFVSVKTVEAHKTHIMTKLDLKSKPELVEYALKKKLLDF.

The Response regulatory domain occupies 2–119; it reads KIVIADDHAV…QLLLAVRTVY (118 aa). D53 is modified (4-aspartylphosphate). An HTH luxR-type domain is found at 148 to 213; it reads TNDPFKILSK…ELVEYALKKK (66 aa). The segment at residues 172–191 is a DNA-binding region (H-T-H motif); that stretch reads NKDIAEKLFVSVKTVEAHKT.

Post-translationally, phosphorylated by NreB.

The protein resides in the cytoplasm. Its function is as follows. Member of the two-component regulatory system NreB/NreC involved in the control of dissimilatory nitrate/nitrite reduction in response to oxygen. Phosphorylated NreC binds to a GC-rich palindromic sequence at the promoters of the nitrate (narGHJI) and nitrite (nir) reductase operons, as well as the putative nitrate transporter gene narT, and activates their expression. The polypeptide is Oxygen regulatory protein NreC (nreC) (Staphylococcus haemolyticus (strain JCSC1435)).